The chain runs to 329 residues: D-alanine--D-alanine ligase (329 aa).

Positions 120–326 (KLWLSAIGIP…FADYLEQILR (207 aa)) constitute an ATP-grasp domain. ATP is bound at residue 150-205 (ALAKWGKVFIKAASQGSSVGCYSASNEADLVKGIADAFGYSEQVLIEKAVKPRELE). Residues Asp280, Glu293, and Asn295 each coordinate Mg(2+).

This sequence belongs to the D-alanine--D-alanine ligase family. Mg(2+) is required as a cofactor. Mn(2+) serves as cofactor.

It is found in the cytoplasm. It catalyses the reaction 2 D-alanine + ATP = D-alanyl-D-alanine + ADP + phosphate + H(+). It participates in cell wall biogenesis; peptidoglycan biosynthesis. In terms of biological role, cell wall formation. The chain is D-alanine--D-alanine ligase from Aeromonas hydrophila subsp. hydrophila (strain ATCC 7966 / DSM 30187 / BCRC 13018 / CCUG 14551 / JCM 1027 / KCTC 2358 / NCIMB 9240 / NCTC 8049).